A 286-amino-acid polypeptide reads, in one-letter code: Toxin zeta (286 aa).

Residue 39-46 coordinates ATP; it reads GQPGSGKT. The disordered stretch occupies residues 249 to 286; that stretch reads MVQNQHQETPEFKAIQQKMESLQPPTPPIPKTPKLPGI. Residues 272-286 show a composition bias toward pro residues; that stretch reads PPTPPIPKTPKLPGI.

It belongs to the zeta toxin family. In the presence of the epsilon antitoxin, forms an inactive PezA(2)PezT(2) heterotetramer.

It carries out the reaction UDP-N-acetyl-alpha-D-glucosamine + ATP = UDP-N-acetyl-alpha-D-glucosamine 3'-phosphate + ADP + H(+). Its function is as follows. Toxic component of a type II toxin-antitoxin (TA) system. Phosphorylates UDP-N-acetyl-D-glucosamine (UNAG) on the 3'-hydroxyl group of the N-acetyl-D-glucosamine moiety, yielding UNAG-3P. UNAG-3P inhibits MurA, the first committed step in cell wall synthesis, which is then blocked. Phosphorylation is inhibited by cognate epsilon antitoxin. Part of a postsegregational killing (PSK) system involved in the killing of plasmid-free cells. The zeta toxin induces programmed cell death. The chain is Toxin zeta from Enterococcus hirae.